The chain runs to 2055 residues: Protein PHOTOPERIOD-INDEPENDENT EARLY FLOWERING 1 (2055 aa).

Residues 1-47 (MASKGGKSKPDIVMASKSGKSKPDNESRAKRQKTLEAPKEPRRPKTH) are disordered. Over residues 21–47 (SKPDNESRAKRQKTLEAPKEPRRPKTH) the composition is skewed to basic and acidic residues. Residues 29–36 (AKRQKTLE) carry the Nuclear localization signal 1 motif. Residues 35–107 (LEAPKEPRRP…EEQRLRKVAL (73 aa)) form the HSA domain. 2 coiled-coil regions span residues 78–147 (LRAS…LEFL) and 229–250 (EEDE…LQNE). Disordered stretches follow at residues 183–332 (KSDE…SNDS) and 340–359 (ETHS…KSRK). Positions 208 to 230 (ELDEDYDLKSEDETEDDEDTIEE) are enriched in acidic residues. Basic and acidic residues-rich tracts occupy residues 231 to 243 (DEKH…RQEE) and 267 to 276 (VSRETSPVKD). A coiled-coil region spans residues 392–416 (EEELAKADNEDHVEEIALLQKESEM). The interval 432–461 (KDISEDESESSFAVSEDSIVDSDENRQQAD) is disordered. Residues 548–713 (VTMYEKKLNG…WSLMHFLMPH (166 aa)) enclose the Helicase ATP-binding domain. An ATP-binding site is contributed by 561–568 (DEMGLGKT). A DEAH box motif is present at residues 664–667 (DEAH). The 154-residue stretch at 1076 to 1229 (KLQELAMLLR…NLVIQNGEYN (154 aa)) folds into the Helicase C-terminal domain. The interval 1293–1313 (EEAVDNQEFTEEPVERPEDDE) is disordered. Residues 1419–1492 (FEEKEWELDH…EREAAEVAEM (74 aa)) are a coiled coil. 2 short sequence motifs (nuclear localization signal) span residues 1506 to 1513 (KKKKKAKK) and 1570 to 1577 (KKRDLIVD). Positions 1577-1597 (DTDEEKTSKKKAKKHKKSLPN) are disordered. Basic residues predominate over residues 1584-1594 (SKKKAKKHKKS). Residues 1673–1727 (SWLPQEDAILCAMVHEYGPNWNFVSGTLYGMTAGGAYRGRYRHPAYCCERYRELI) form the Myb-like domain. Disordered stretches follow at residues 1843–1864 (ALQD…LQET) and 1951–1977 (KSRT…STKS). Over residues 1844 to 1864 (LQDSGPSQPDNTISRSRLQET) the composition is skewed to polar residues. Residues 2006–2029 (GDREEEEEQEVDEKANSAEIEMIS) are a coiled coil.

Belongs to the SNF2/RAD54 helicase family. SWR1 subfamily. Component of the SWR1 chromatin-remodeling complex composed of at least ARP6/ESD1/SUF3, PIE1, SWC6, SWC2 and H2AZs (HTA8, HTA9, HTA11). Interacts (via c-terminus) with SWC6 and ARP6 and (via N-terminus) with H2AZs. As to expression, expressed in ovules, but not in stamens.

Its subcellular location is the nucleus. The enzyme catalyses ATP + H2O = ADP + phosphate + H(+). Functionally, component of the SWR1 complex which mediates the ATP-dependent exchange of histone H2A for the H2A variant H2A.F/Z leading to transcriptional regulation of selected genes (e.g. FLC) by chromatin remodeling. Probable DNA-dependent ATPase. Not involved in the repression of FLC in gametophytes, but required for the reactivation of FLC in early embryos and for the maintenance of full activation of FLC in late embryos. The polypeptide is Protein PHOTOPERIOD-INDEPENDENT EARLY FLOWERING 1 (PIE1) (Arabidopsis thaliana (Mouse-ear cress)).